Here is a 505-residue protein sequence, read N- to C-terminus: Poxin-Schlafen (505 aa).

Residues 1–238 are poxin-like; it reads MAMFYAHAFG…SKEERVDYVL (238 aa). The active-site Proton donor is histidine 17. The active-site Shared with catalytic histidine of dimeric partner is the tyrosine 138. Lysine 142 serves as the catalytic Proton acceptor; shared with catalytic histidine of dimeric partner. Residues 239-505 are schlafen-like; sequence MKRLESIRHL…PDEWVSHIKF (267 aa).

It in the N-terminal section; belongs to the poxin family. The protein in the C-terminal section; belongs to the Schlafen protein family. Subgroup poxviridae B3 subfamily. In terms of assembly, homodimer.

The enzyme catalyses 2',3'-cGAMP + H2O = Gp(2'-5')Ap(3') + H(+). Nuclease that is responsible for viral evasion of host cGAS-STING innate immunity. Cleaves 2',3'-cGAMP which is produced by host cGAS following recognition of cytosolic DNA and blocks the subsequent 2',3'-cGAMP-mediated activation of TMEM173/STING, which normally spreads to adjacent cells and activates the interferon and NF-kappa-B immune responses. The chain is Poxin-Schlafen (OPG188) from Bos taurus (Bovine).